A 318-amino-acid chain; its full sequence is Taste receptor type 2 member 60 (318 aa).

Over 1-7 (MNGDHMV) the chain is Extracellular. A helical membrane pass occupies residues 8–28 (LGSSVTDKKAIILVTILLLLR). Residues 29–40 (LVAIAGNGFITA) lie on the Cytoplasmic side of the membrane. A helical transmembrane segment spans residues 41 to 61 (ALGVEWVLRRMLLPCDKLLVS). Over 62–88 (LGASHFCLQSVVMGKTIYVFLYPMAFP) the chain is Extracellular. A helical transmembrane segment spans residues 89 to 109 (YNPVLQFLAFQWDFLNAATLW). Residues 110 to 128 (FSTWLSVFYCVKIATFTHP) are Cytoplasmic-facing. The chain crosses the membrane as a helical span at residues 129–149 (VFFWLKHKLSGWLPWMIFSYV). Residues 150–183 (GLSSFTTILFFIGNHRMYQNYLKNHLQPWNVTGN) are Extracellular-facing. A glycan (N-linked (GlcNAc...) asparagine) is linked at N179. A helical membrane pass occupies residues 184 to 204 (SIRSYCEKFYLFPLKMITWTM). Topologically, residues 205–234 (PTAVFFICMILLITSLGRHMKKALLTTSGF) are cytoplasmic. Residues 235-255 (REPSVQAHIKALLALLSFAML) traverse the membrane as a helical segment. At 256–264 (FISYFLSLV) the chain is on the extracellular side. Residues 265 to 285 (FSAAGIFPPLDFKFWVWESVI) form a helical membrane-spanning segment. Over 286–318 (YLCAAVHPIILLFSNCRLRAVLKSRRSSRCGTP) the chain is Cytoplasmic.

Belongs to the G-protein coupled receptor T2R family.

It is found in the membrane. Its function is as follows. Receptor that may play a role in the perception of bitterness and is gustducin-linked. May play a role in sensing the chemical composition of the gastrointestinal content. The activity of this receptor may stimulate alpha gustducin, mediate PLC-beta-2 activation and lead to the gating of TRPM5. This Pan paniscus (Pygmy chimpanzee) protein is Taste receptor type 2 member 60 (TAS2R60).